The sequence spans 482 residues: tRNA sulfurtransferase (482 aa).

Positions 61–165 constitute a THUMP domain; that stretch reads LAIRDALTRI…DDRLLLIKGR (105 aa). ATP contacts are provided by residues 183–184, lysine 265, glycine 287, and glutamine 296; that span reads LI. Cysteine 344 and cysteine 456 are oxidised to a cystine. A Rhodanese domain is found at 404-482; that stretch reads FGPNDVILDI…GFNNVKVYRP (79 aa). The Cysteine persulfide intermediate role is filled by cysteine 456.

It belongs to the ThiI family.

Its subcellular location is the cytoplasm. The enzyme catalyses [ThiI sulfur-carrier protein]-S-sulfanyl-L-cysteine + a uridine in tRNA + 2 reduced [2Fe-2S]-[ferredoxin] + ATP + H(+) = [ThiI sulfur-carrier protein]-L-cysteine + a 4-thiouridine in tRNA + 2 oxidized [2Fe-2S]-[ferredoxin] + AMP + diphosphate. The catalysed reaction is [ThiS sulfur-carrier protein]-C-terminal Gly-Gly-AMP + S-sulfanyl-L-cysteinyl-[cysteine desulfurase] + AH2 = [ThiS sulfur-carrier protein]-C-terminal-Gly-aminoethanethioate + L-cysteinyl-[cysteine desulfurase] + A + AMP + 2 H(+). It participates in cofactor biosynthesis; thiamine diphosphate biosynthesis. Its function is as follows. Catalyzes the ATP-dependent transfer of a sulfur to tRNA to produce 4-thiouridine in position 8 of tRNAs, which functions as a near-UV photosensor. Also catalyzes the transfer of sulfur to the sulfur carrier protein ThiS, forming ThiS-thiocarboxylate. This is a step in the synthesis of thiazole, in the thiamine biosynthesis pathway. The sulfur is donated as persulfide by IscS. The protein is tRNA sulfurtransferase of Shigella boydii serotype 4 (strain Sb227).